The primary structure comprises 417 residues: Tyrosine--tRNA ligase (417 aa).

Tyr-39 contributes to the L-tyrosine binding site. Residues 44–53 (CTAPSLHVGH) carry the 'HIGH' region motif. Positions 176 and 180 each coordinate L-tyrosine. The 'KMSKS' region motif lies at 236 to 240 (KMGKT). Lys-239 is a binding site for ATP. An S4 RNA-binding domain is found at 350-417 (AGVLALFVKA…KKRHVLLRPA (68 aa)).

This sequence belongs to the class-I aminoacyl-tRNA synthetase family. TyrS type 1 subfamily. Homodimer.

The protein resides in the cytoplasm. The catalysed reaction is tRNA(Tyr) + L-tyrosine + ATP = L-tyrosyl-tRNA(Tyr) + AMP + diphosphate + H(+). Catalyzes the attachment of tyrosine to tRNA(Tyr) in a two-step reaction: tyrosine is first activated by ATP to form Tyr-AMP and then transferred to the acceptor end of tRNA(Tyr). In Nitrobacter winogradskyi (strain ATCC 25391 / DSM 10237 / CIP 104748 / NCIMB 11846 / Nb-255), this protein is Tyrosine--tRNA ligase.